A 309-amino-acid polypeptide reads, in one-letter code: Dehydrogenase/reductase SDR family member 7B (309 aa).

Topologically, residues 1–4 (MDLT) are cytoplasmic. The helical; Signal-anchor for type II membrane protein transmembrane segment at 5–25 (TWAIFPLLLGSIGVYSLYKLL) threads the bilayer. Over 26-272 (QRLRSGAYLQ…AVGERRKELL (247 aa)) the chain is Lumenal. Serine 46 and leucine 48 together coordinate NAD(+). Position 178 (serine 178) interacts with substrate. Residues tyrosine 191, lysine 195, and threonine 226 each coordinate NAD(+). Tyrosine 191 acts as the Proton acceptor in catalysis.

This sequence belongs to the short-chain dehydrogenases/reductases (SDR) family.

It is found in the endoplasmic reticulum membrane. Putative oxidoreductase. This is Dehydrogenase/reductase SDR family member 7B (dhrs7b) from Xenopus tropicalis (Western clawed frog).